The sequence spans 1590 residues: Defective chorion protein, FC177 isoform (1590 aa).

The signal sequence occupies residues 1 to 19; sequence MRLFSLLPLLALLVVQAAG. Disordered stretches follow at residues 23-60, 184-212, and 268-294; these read VTSDDPATDAGSTTNSTTDTKPRIPSQDEILGQMPSIN, APAPAPAAAPPPAPAPAADPPAAPVPDAP, and PAQPAAAGTDAQASDISEVRVRPEDPY. Residues 32–41 show a composition bias toward polar residues; sequence AGSTTNSTTD. Residues 268–280 are compositionally biased toward low complexity; sequence PAQPAAAGTDAQA. 5 repeat units span residues 493-518, 519-544, 545-570, 571-596, and 597-622. The interval 493 to 788 is 12 X 26 AA approximate tandem repeats, Glu, Met-rich; it reads QNPMMMQQRQ…IQQQQRQMMQ (296 aa). Residues 623–652 form a 6; approximate repeat; sequence QNPMMMQQRQWSEEQAKIQHDQQMAQQMAQ. A 7; approximate repeat occupies 653-680; it reads QGLMMTEQRQRQWSEDQAKIQQAQQMAQ. Residues 681–696 form an 8; approximate repeat; that stretch reads QTPMMMPQMQQRQWTE. One copy of the 9; approximate repeat lies at 697–720; the sequence is DPQMVQQMQQRQWAEDQTRMQMAQ. A 10; approximate repeat occupies 721 to 733; sequence QNPMMQQQRQMAE. An 11; approximate repeat occupies 734–758; the sequence is NPQMMQQRQWSEEQTKIEQAQQMAQ. One copy of the 12; approximate repeat lies at 759-788; the sequence is QNQMMMQQMQQRQWSEDQAQIQQQQRQMMQ. 6 disordered regions span residues 843–875, 944–983, 1119–1221, 1261–1352, 1375–1515, and 1538–1590; these read GPQMPENEGTARHKVDALGVGGNKRKKSKSKSA, RTINPKQPGEVGGSESQKSNSNPPTTLTPAPQEQPQEHRV, EEDA…TKSI, PVTE…DDNN, FAQG…QATV, and EKKS…QTKA. The segment covering 957-977 has biased composition (polar residues); sequence SESQKSNSNPPTTLTPAPQEQ. The segment covering 1119–1130 has biased composition (acidic residues); sequence EEDAQQEPMEEE. The segment covering 1131 to 1148 has biased composition (basic and acidic residues); sequence QLQHDPNTEPQYNHKDFV. Positions 1151 to 1195 are enriched in low complexity; it reads TTSTASPITSTTEAATPTGSDSTSEATVTPEVTTTTSTSTTTTTE. Residues 1205 to 1221 show a composition bias toward polar residues; the sequence is QQDSQAEAESSHVTKSI. Residues 1272–1288 show a composition bias toward basic and acidic residues; sequence EPSKQEDKPKVEEKVIA. Positions 1295–1306 are enriched in acidic residues; it reads EQEEELEEDEDS. Low complexity-rich tracts occupy residues 1307–1319 and 1435–1452; these read TSISTTTETPSPS and DSGSDSSDGTTTTTTPSP. A compositionally biased stretch (basic residues) spans 1493 to 1504; sequence QRPKKSMSKPKK. Over residues 1505 to 1515 the composition is skewed to low complexity; it reads QSSQVTTQATV. Basic residues predominate over residues 1554 to 1576; that stretch reads TKPKSIKPVKVIKRKRLRRRQHK. Positions 1577–1590 are enriched in polar residues; sequence SIATTIRSPIQTKA.

It localises to the secreted. In terms of biological role, required for proper assembly of the eggshell. The protein is Defective chorion protein, FC177 isoform of Drosophila melanogaster (Fruit fly).